A 148-amino-acid polypeptide reads, in one-letter code: Sperm-specific protein PHI-2B (148 aa).

A compositionally biased stretch (basic residues) spans 1 to 35; that stretch reads PSPSRRSRSRSRSRSKSPKRSPAKKARKTPKKRRA. Disordered regions lie at residues 1–44 and 97–148; these read PSPS…KPST and GVLV…KSNN. In terms of domain architecture, H15 spans 40-119; the sequence is KKPSTLSMIV…GATGSFRVGK (80 aa). Residues 124 to 148 show a composition bias toward basic residues; that stretch reads PKKKAKKAKSPKKKSSKKSSNKSNN.

Belongs to the histone H1/H5 family. As to expression, sperm.

The protein localises to the nucleus. It localises to the chromosome. Functionally, linker histones are implicated in chromatin remodeling and/or transcriptional regulation during spermiogenesis, the process of spermatid maturation into spermatozoa. The protein is Sperm-specific protein PHI-2B of Mytilus californianus (California mussel).